A 429-amino-acid polypeptide reads, in one-letter code: MVSSPIKSEAPVRHDVKDLSLAPLGQQRIEWASREMPVLRQIRDRFEKEKPFAGIRLAACCHVTTETANLAIALKAGGADAVLIASNPLSTQDDVAASLVVNYGIPVFAQKGEDTATYMRHVNIALDHRPNIIIDDGCDVVATLVKERQHQISDIIGTTEETTTGIVRLKAMFRDGVLTFPAINVNDADTKHFFDNRYGTGQSTLDGIIRATNILLAGKTVVVAGYGWCGKGTALRARGMGANVIVTEIDPVRAIEAVMDGFRVMPMLDAAPLGDIFITVTGNKHVIRAEHFAVMKDGAMVANSGHFDIEIDLATLKTLAKQVRVVRNFTEEYILPSGKSIIVLGEGRLINLAAAEGHPASVMDMSFANQALGCEYLVKNKGQLAAGIHPIPAAVDQEIARLKLQAMGIAIDTLTPEQVEYMNSWTSGT.

Substrate-binding residues include Thr-64, Asp-136, and Glu-161. 162–164 (TTT) is an NAD(+) binding site. 2 residues coordinate substrate: Lys-191 and Asp-195. NAD(+) contacts are provided by residues Asn-196, 225-230 (GYGWCG), Glu-248, Asn-283, 304-306 (SGH), and Asn-351.

This sequence belongs to the adenosylhomocysteinase family. It depends on NAD(+) as a cofactor.

It localises to the cytoplasm. It catalyses the reaction S-adenosyl-L-homocysteine + H2O = L-homocysteine + adenosine. The protein operates within amino-acid biosynthesis; L-homocysteine biosynthesis; L-homocysteine from S-adenosyl-L-homocysteine: step 1/1. Functionally, may play a key role in the regulation of the intracellular concentration of adenosylhomocysteine. The protein is Adenosylhomocysteinase of Thermosynechococcus vestitus (strain NIES-2133 / IAM M-273 / BP-1).